We begin with the raw amino-acid sequence, 401 residues long: MDRRVVITGIGGLCGLGTNAASIWKEMREGPSAISPIITTDLYDLEGTVGLEIKAIPEHDIPRKQLVSMDRFSLLAVIAATEAMKQAGLSCDEQNAHRFGAAMGLGGPGWDTIEETYRSILLDGVTRARIFTAPKGMPSAAAGHVSIFLGLRGPVFGVTSACAAGNHAIASAVDQIRLGRADVMLAGGSDAPLTWGVLKSWEALRVLAPDTCRPFSADRKGVVLGEGAGMAVLESYEHAAARGATMLAEVAGIGLSGDAYDIVMPSIEGPEAAMRSCLADAELNPDDVDYLNAHGTGTVANDEMETAAIKRVFGDHAFQMSVSSTKSMHAHCLGAASALEMIACVMAIQEGVIPPTANYREPDPQCDLDVTPNVPREQRCGSMSNAFAMGGTNAVLAFRQV.

Positions 2–400 (DRRVVITGIG…GTNAVLAFRQ (399 aa)) constitute a Ketosynthase family 3 (KS3) domain. Catalysis depends on for beta-ketoacyl synthase activity residues C162, H294, and H331. A helical transmembrane segment spans residues 329–348 (HAHCLGAASALEMIACVMAI).

It belongs to the thiolase-like superfamily. Beta-ketoacyl-ACP synthases family.

Its subcellular location is the cell inner membrane. Proposed to synthesize NOD factor fatty acyl chain. Involved in the synthesis of a highly unsaturated fatty acid moiety, which forms part of a lipo-oligosaccharide that is responsible for host specificity. The chain is Nodulation protein E (nodE) from Rhizobium leguminosarum bv. trifolii.